Consider the following 772-residue polypeptide: DNA ligase (772 aa).

NAD(+) contacts are provided by residues 80–84 (DAEYD), 130–131 (SL), and E160. K162 (N6-AMP-lysine intermediate) is an active-site residue. Positions 183, 220, 336, and 360 each coordinate NAD(+). Zn(2+) contacts are provided by C454, C457, C473, and C479. Residues 685–772 (APEQTLEGLT…NGPQGITTIG (88 aa)) enclose the BRCT domain.

This sequence belongs to the NAD-dependent DNA ligase family. LigA subfamily. It depends on Mg(2+) as a cofactor. Mn(2+) serves as cofactor.

The enzyme catalyses NAD(+) + (deoxyribonucleotide)n-3'-hydroxyl + 5'-phospho-(deoxyribonucleotide)m = (deoxyribonucleotide)n+m + AMP + beta-nicotinamide D-nucleotide.. Its function is as follows. DNA ligase that catalyzes the formation of phosphodiester linkages between 5'-phosphoryl and 3'-hydroxyl groups in double-stranded DNA using NAD as a coenzyme and as the energy source for the reaction. It is essential for DNA replication and repair of damaged DNA. In Cutibacterium acnes (strain DSM 16379 / KPA171202) (Propionibacterium acnes), this protein is DNA ligase.